Here is a 200-residue protein sequence, read N- to C-terminus: ATP synthase subunit b 2 (200 aa).

A compositionally biased stretch (polar residues) spans 1–16; sequence MAEQNILTTPSPNADT. Residues 1–38 are disordered; the sequence is MAEQNILTTPSPNADTTIVPPGSPHTHTEQPSGGHGGA. Residues 46–66 traverse the membrane as a helical segment; sequence TFLAQLIWLALAFGLLYYLMS.

Belongs to the ATPase B chain family. In terms of assembly, F-type ATPases have 2 components, F(1) - the catalytic core - and F(0) - the membrane proton channel. F(1) has five subunits: alpha(3), beta(3), gamma(1), delta(1), epsilon(1). F(0) has three main subunits: a(1), b(2) and c(10-14). The alpha and beta chains form an alternating ring which encloses part of the gamma chain. F(1) is attached to F(0) by a central stalk formed by the gamma and epsilon chains, while a peripheral stalk is formed by the delta and b chains.

The protein localises to the cell inner membrane. In terms of biological role, f(1)F(0) ATP synthase produces ATP from ADP in the presence of a proton or sodium gradient. F-type ATPases consist of two structural domains, F(1) containing the extramembraneous catalytic core and F(0) containing the membrane proton channel, linked together by a central stalk and a peripheral stalk. During catalysis, ATP synthesis in the catalytic domain of F(1) is coupled via a rotary mechanism of the central stalk subunits to proton translocation. Its function is as follows. Component of the F(0) channel, it forms part of the peripheral stalk, linking F(1) to F(0). The b'-subunit is a diverged and duplicated form of b found in plants and photosynthetic bacteria. This Methylorubrum populi (strain ATCC BAA-705 / NCIMB 13946 / BJ001) (Methylobacterium populi) protein is ATP synthase subunit b 2 (atpF2).